Here is a 518-residue protein sequence, read N- to C-terminus: Serine/threonine-protein kinase UL13 (518 aa).

Disordered stretches follow at residues 1–22 (MDESGRQRPASHVAADISPQGA) and 39–120 (SRRA…PSPP). Residues 44–61 (GRPSGPSPRDGAVSGARP) are compositionally biased toward low complexity. The 368-residue stretch at 151–518 (PGARSFGGSG…ANPAARHSLS (368 aa)) folds into the Protein kinase domain. ATP-binding positions include 157-165 (GGSGGYGEV) and Lys176. Residue Asp277 is the Proton acceptor of the active site.

This sequence belongs to the protein kinase superfamily. Ser/Thr protein kinase family. Post-translationally, autophosphorylated.

The protein localises to the virion tegument. It is found in the host nucleus. The enzyme catalyses L-seryl-[protein] + ATP = O-phospho-L-seryl-[protein] + ADP + H(+). It carries out the reaction L-threonyl-[protein] + ATP = O-phospho-L-threonyl-[protein] + ADP + H(+). Multifunctional serine/threonine kinase that plays a role in several processes including egress of virus particles from the nucleus, modulation of the actin cytoskeleton and regulation of viral and cellular gene expression. Regulates the nuclear localization of viral envelopment factors UL34 and UL31, by phosphorylating the US3 kinase, indicating a role in nuclear egress. Disrupts host nuclear lamins, including LMNA and LMNB1. Phosphorylates the viral Fc receptor composed of glycoproteins E (gE) and I (gI). Phosphorylation of glycoprotein E (gE) by UL13 alters its subcellular localization, from the host early endosome to the plasma membrane. Participates in the transcriptional regulation of cellular and viral mRNAs mainly by phosphorylating the viral transcriptional regulator ICP22. Additional substrates have been identified, including UL41, UL49 or host EF1D. In Homo sapiens (Human), this protein is Serine/threonine-protein kinase UL13.